The following is a 1050-amino-acid chain: Valine--tRNA ligase (1050 aa).

A compositionally biased stretch (basic and acidic residues) spans Glu37–Thr57. The tract at residues Glu37 to Arg72 is disordered. Positions Pro127–His137 match the 'HIGH' region motif. The 'KMSKS' region signature appears at Lys642–Ser646. An ATP-binding site is contributed by Lys645.

This sequence belongs to the class-I aminoacyl-tRNA synthetase family.

The catalysed reaction is tRNA(Val) + L-valine + ATP = L-valyl-tRNA(Val) + AMP + diphosphate. The sequence is that of Valine--tRNA ligase from Caenorhabditis elegans.